A 464-amino-acid chain; its full sequence is MVFFRSVSAISRLRSRAVQQSSLSNSVRWLHSSELDLKSQMQEIIPEQQDRLKKLKSEQGKVPVGNITVDMVLGGMRGMTGLLWETSLLDADEGIRFRGMSIPECQKILPSAESGEEPLPESLLWLLLTGKVPTKEQANALSTELAHRAAVPAIDALPSTAHPMTQFASGVMALQVQSEFQKAYEQGDISKSKYWEPTFEDALNLIARVPVVASYVYRRMYKDGSIIPLDDSLDYGANFSHMLGFDSPQMKELMRLYVTIHSDHEGGNVSAHAGHLVGSALSDPYLSFAAALNGLAGPLHGLANQEVLLWIKLVVEECGESISKEQLKDYVWKTLNSGKVVPGYGHGVLRKTDPRYICQREFALKHLPDDPLFQLVSKLYEVVPPILTELGKVKNPWPNVDAHSGVLLNYYGLTEARYYTVLFGVSRSLGICSQLIWDRALGLPLERPKSVNMDWLDNFTRLNR.

A mitochondrion-targeting transit peptide spans 1 to 25; sequence MVFFRSVSAISRLRSRAVQQSSLSN. Residues His-300, His-346, and Asp-401 contribute to the active site.

This sequence belongs to the citrate synthase family.

It is found in the mitochondrion matrix. The catalysed reaction is oxaloacetate + acetyl-CoA + H2O = citrate + CoA + H(+). It functions in the pathway carbohydrate metabolism; tricarboxylic acid cycle; isocitrate from oxaloacetate: step 1/2. This Arabidopsis thaliana (Mouse-ear cress) protein is Citrate synthase 5, mitochondrial (CSY5).